We begin with the raw amino-acid sequence, 144 residues long: Cell division protein SepF (144 aa).

Acidic residues predominate over residues 14 to 31 (EDDEMNEVPYTESEEQQE). The segment at 14 to 41 (EDDEMNEVPYTESEEQQEEIPQTQKNER) is disordered.

This sequence belongs to the SepF family. As to quaternary structure, homodimer. Interacts with FtsZ.

Its subcellular location is the cytoplasm. Functionally, cell division protein that is part of the divisome complex and is recruited early to the Z-ring. Probably stimulates Z-ring formation, perhaps through the cross-linking of FtsZ protofilaments. Its function overlaps with FtsA. The polypeptide is Cell division protein SepF (Lactobacillus johnsonii (strain CNCM I-12250 / La1 / NCC 533)).